Here is a 370-residue protein sequence, read N- to C-terminus: 3,5-dihydroxyphenylacetyl-CoA synthase (370 aa).

Cys-158 is a catalytic residue.

This sequence belongs to the thiolase-like superfamily. Chalcone/stilbene synthases family.

The enzyme catalyses 4 malonyl-CoA + 4 H(+) = (3,5-dihydroxyphenyl)acetyl-CoA + 4 CO2 + 3 CoA + H2O. Its pathway is antibiotic biosynthesis; vancomycin biosynthesis. Involved in the biosynthesis of the nonproteinogenic amino acid monomer (S)-3,5-dihydroxyphenylglycine (Dpg) responsible of the production of vancomycin and teicoplanin antibiotics. Catalyzes the Claisen condensation of four molecules of malonyl-CoA to yield 3,5-dihydroxyphenylacetyl-CoA (DPA-CoA) and three free coenzyme A (CoA). DpgA requires the presence of the dehydratases DpgB and DpgD to facilitate the aromatization of the DPA-S-DgpA or DPA-S-CoA intermediate. The chain is 3,5-dihydroxyphenylacetyl-CoA synthase (dpgA) from Amycolatopsis orientalis (Nocardia orientalis).